The following is a 459-amino-acid chain: Ribosomal protein uS12 methylthiotransferase RimO (459 aa).

Positions 11–126 constitute an MTTase N-terminal domain; the sequence is PKVGMVSLGC…VMQAVHSHLP (116 aa). [4Fe-4S] cluster is bound by residues Cys-20, Cys-56, Cys-85, Cys-157, Cys-161, and Cys-164. Residues 143-388 enclose the Radical SAM core domain; sequence LTPRHYAYLK…MEVAEEVSAA (246 aa). The TRAM domain maps to 391-459; the sequence is ARKVGKTLKV…ADGHDLWGEV (69 aa).

The protein belongs to the methylthiotransferase family. RimO subfamily. [4Fe-4S] cluster is required as a cofactor.

The protein localises to the cytoplasm. It carries out the reaction L-aspartate(89)-[ribosomal protein uS12]-hydrogen + (sulfur carrier)-SH + AH2 + 2 S-adenosyl-L-methionine = 3-methylsulfanyl-L-aspartate(89)-[ribosomal protein uS12]-hydrogen + (sulfur carrier)-H + 5'-deoxyadenosine + L-methionine + A + S-adenosyl-L-homocysteine + 2 H(+). Catalyzes the methylthiolation of an aspartic acid residue of ribosomal protein uS12. The protein is Ribosomal protein uS12 methylthiotransferase RimO of Burkholderia pseudomallei (strain K96243).